We begin with the raw amino-acid sequence, 197 residues long: uncharacterized protein (197 aa).

The N-terminal stretch at 1–19 (MKLASLLVGSLMLAVPALA) is a signal peptide.

The protein localises to the secreted. This is an uncharacterized protein from Arthroderma benhamiae (strain ATCC MYA-4681 / CBS 112371) (Trichophyton mentagrophytes).